The following is a 197-amino-acid chain: MSFSRLYRLLKPALLCGALAAPGLASTMCASRDDWRCARSMHEFSAKDIDGRMVNLDKYRGHVCIVTNVASQUGKTDVNYTQLVDLHARYAECGLRILAFPCNQFGRQEPGSNAEIKEFAAGYNVKFDLFSKICVNGDDAHPLWKWMKVQPKGRGMLGNAIKWNFTKFLIDKNGCVVKRYGPMEEPLVIEKDLPCYL.

A Phosphoserine modification is found at Ser40. Sec73 is an active-site residue. Sec73 is a non-standard amino acid (selenocysteine).

It belongs to the glutathione peroxidase family. Monomer. Has a tendency to form higher mass oligomers. Interacts with FUNDC1; this interaction promotes GPX4 recruitment into mitochondria through TOM/TIM complex where it is degraded by mitophagy.

It is found in the mitochondrion. Its subcellular location is the cytoplasm. The catalysed reaction is a hydroperoxy polyunsaturated fatty acid + 2 glutathione = a hydroxy polyunsaturated fatty acid + glutathione disulfide + H2O. The enzyme catalyses 2 glutathione + H2O2 = glutathione disulfide + 2 H2O. It catalyses the reaction tert-butyl hydroperoxide + 2 glutathione = tert-butanol + glutathione disulfide + H2O. It carries out the reaction cumene hydroperoxide + 2 glutathione = 2-phenylpropan-2-ol + glutathione disulfide + H2O. The catalysed reaction is (9S)-hydroperoxy-(10E,12Z)-octadecadienoate + 2 glutathione = (9S)-hydroxy-(10E,12Z)-octadecadienoate + glutathione disulfide + H2O. The enzyme catalyses (13S)-hydroperoxy-(9Z,11E)-octadecadienoate + 2 glutathione = (13S)-hydroxy-(9Z,11E)-octadecadienoate + glutathione disulfide + H2O. It catalyses the reaction (5S)-hydroperoxy-(6E,8Z,11Z,14Z)-eicosatetraenoate + 2 glutathione = (5S)-hydroxy-(6E,8Z,11Z,14Z)-eicosatetraenoate + glutathione disulfide + H2O. It carries out the reaction (12R)-hydroperoxy-(5Z,8Z,10E,14Z)-eicosatetraenoate + 2 glutathione = (12R)-hydroxy-(5Z,8Z,10E,14Z)-eicosatetraenoate + glutathione disulfide + H2O. The catalysed reaction is (12S)-hydroperoxy-(5Z,8Z,10E,14Z)-eicosatetraenoate + 2 glutathione = (12S)-hydroxy-(5Z,8Z,10E,14Z)-eicosatetraenoate + glutathione disulfide + H2O. The enzyme catalyses (15S)-hydroperoxy-(5Z,8Z,11Z,13E)-eicosatetraenoate + 2 glutathione = (15S)-hydroxy-(5Z,8Z,11Z,13E)-eicosatetraenoate + glutathione disulfide + H2O. It catalyses the reaction (5S)-hydroperoxy-(6E,8Z,11Z,14Z,17Z)-eicosapentaenoate + 2 glutathione = (5S)-hydroxy-(6E,8Z,11Z,14Z,17Z)-eicosapentaenoate + glutathione disulfide + H2O. It carries out the reaction (12S)-hydroperoxy-(5Z,8Z,10E,14Z,17Z)-eicosapentaenoate + 2 glutathione = (12S)-hydroxy-(5Z,8Z,10E,14Z,17Z)-eicosapentaenoate + glutathione disulfide + H2O. The catalysed reaction is (15S)-hydroperoxy-(5Z,8Z,11Z,13E,17Z)-eicosapentaenoate + 2 glutathione = (15S)-hydroxy-(5Z,8Z,11Z,13E,17Z)-eicosapentaenoate + glutathione disulfide + H2O. The enzyme catalyses (15S)-hydroperoxy-(11Z,13E)-eicosadienoate + 2 glutathione = (15S)-hydroxy-(11Z,13E)-eicosadienoate + glutathione disulfide + H2O. It catalyses the reaction (17S)-hydroperoxy-(4Z,7Z,10Z,13Z,15E,19Z)-docosahexaenoate + 2 glutathione = (17S)-hydroxy-(4Z,7Z,10Z,13Z,15E,19Z)-docosahexaenoate + glutathione disulfide + H2O. It carries out the reaction a hydroperoxy-1,2-diacyl-glycero-3-phosphocholine + 2 glutathione = a hydroxy-1,2-diacyl-glycero-3-phosphocholine + glutathione disulfide + H2O. In terms of biological role, essential antioxidant peroxidase that directly reduces phospholipid hydroperoxide even if they are incorporated in membranes and lipoproteins. Can also reduce fatty acid hydroperoxide, cholesterol hydroperoxide and thymine hydroperoxide. Plays a key role in protecting cells from oxidative damage by preventing membrane lipid peroxidation. Required to prevent cells from ferroptosis, a non-apoptotic cell death resulting from an iron-dependent accumulation of lipid reactive oxygen species. The presence of selenocysteine (Sec) versus Cys at the active site is essential for life: it provides resistance to overoxidation and prevents cells against ferroptosis. The presence of Sec at the active site is also essential for the survival of a specific type of parvalbumin-positive interneurons, thereby preventing against fatal epileptic seizures. May be required to protect cells from the toxicity of ingested lipid hydroperoxides. Required for normal sperm development and male fertility. Essential for maturation and survival of photoreceptor cells. Plays a role in a primary T-cell response to viral and parasitic infection by protecting T-cells from ferroptosis and by supporting T-cell expansion. Plays a role of glutathione peroxidase in platelets in the arachidonic acid metabolism. Reduces hydroperoxy ester lipids formed by a 15-lipoxygenase that may play a role as down-regulator of the cellular 15-lipoxygenase pathway. Can also reduce small soluble hydroperoxides such as H2O2, cumene hydroperoxide and tert-butyl hydroperoxide. This Bos taurus (Bovine) protein is Phospholipid hydroperoxide glutathione peroxidase.